The sequence spans 187 residues: Cytochrome b-245 chaperone 1 (187 aa).

A helical transmembrane segment spans residues 20-42; it reads GIRSWSLLVGILSTGLAAAYYSG. The tract at residues 167 to 187 is disordered; sequence ESPSERSQSSDSEPDGPGGQS. Residues Ser168 and Ser170 each carry the phosphoserine modification.

Belongs to the CYBC1 family. Interacts with CYBB; CYBC1 may act as a chaperone stabilizing Cytochrome b-245 heterodimer.

It is found in the endoplasmic reticulum membrane. Functions as a chaperone necessary for a stable expression of the CYBA and CYBB subunits of the cytochrome b-245 heterodimer. Controls the phagocyte respiratory burst and is essential for innate immunity. This chain is Cytochrome b-245 chaperone 1, found in Mus musculus (Mouse).